We begin with the raw amino-acid sequence, 486 residues long: Glutamate--tRNA ligase (486 aa).

Positions 12-22 (PSPTGTPHVGL) match the 'HIGH' region motif. The short motif at 256 to 260 (KLSKR) is the 'KMSKS' region element. K259 contacts ATP.

The protein belongs to the class-I aminoacyl-tRNA synthetase family. Glutamate--tRNA ligase type 1 subfamily. Monomer.

Its subcellular location is the cytoplasm. The enzyme catalyses tRNA(Glu) + L-glutamate + ATP = L-glutamyl-tRNA(Glu) + AMP + diphosphate. Catalyzes the attachment of glutamate to tRNA(Glu) in a two-step reaction: glutamate is first activated by ATP to form Glu-AMP and then transferred to the acceptor end of tRNA(Glu). This chain is Glutamate--tRNA ligase, found in Mycolicibacterium smegmatis (strain ATCC 700084 / mc(2)155) (Mycobacterium smegmatis).